The sequence spans 349 residues: Anthranilate phosphoribosyltransferase (349 aa).

5-phospho-alpha-D-ribose 1-diphosphate is bound by residues Gly94, 97–98, Thr102, 104–107, 122–130, and Ser134; these read GD, NIST, and KHGNRSVSS. Residue Gly94 coordinates anthranilate. Ser106 is a binding site for Mg(2+). Residue Asn125 participates in anthranilate binding. Arg180 is a binding site for anthranilate. 2 residues coordinate Mg(2+): Asp239 and Glu240.

Belongs to the anthranilate phosphoribosyltransferase family. Homodimer. The cofactor is Mg(2+).

It carries out the reaction N-(5-phospho-beta-D-ribosyl)anthranilate + diphosphate = 5-phospho-alpha-D-ribose 1-diphosphate + anthranilate. The protein operates within amino-acid biosynthesis; L-tryptophan biosynthesis; L-tryptophan from chorismate: step 2/5. Catalyzes the transfer of the phosphoribosyl group of 5-phosphorylribose-1-pyrophosphate (PRPP) to anthranilate to yield N-(5'-phosphoribosyl)-anthranilate (PRA). This chain is Anthranilate phosphoribosyltransferase, found in Trichlorobacter lovleyi (strain ATCC BAA-1151 / DSM 17278 / SZ) (Geobacter lovleyi).